Consider the following 107-residue polypeptide: Phosphoribosyl-ATP pyrophosphatase (107 aa).

This sequence belongs to the PRA-PH family.

Its subcellular location is the cytoplasm. It carries out the reaction 1-(5-phospho-beta-D-ribosyl)-ATP + H2O = 1-(5-phospho-beta-D-ribosyl)-5'-AMP + diphosphate + H(+). Its pathway is amino-acid biosynthesis; L-histidine biosynthesis; L-histidine from 5-phospho-alpha-D-ribose 1-diphosphate: step 2/9. The chain is Phosphoribosyl-ATP pyrophosphatase from Bacillus cytotoxicus (strain DSM 22905 / CIP 110041 / 391-98 / NVH 391-98).